Here is a 494-residue protein sequence, read N- to C-terminus: Glutamate--tRNA ligase (494 aa).

A 'HIGH' region motif is present at residues 10–20 (PSPTGDPHVGT). Zn(2+) contacts are provided by Cys-107, Cys-109, Cys-134, and His-136. Positions 251-255 (KLSKR) match the 'KMSKS' region motif. An ATP-binding site is contributed by Lys-254.

Belongs to the class-I aminoacyl-tRNA synthetase family. Glutamate--tRNA ligase type 1 subfamily. In terms of assembly, monomer. Requires Zn(2+) as cofactor.

The protein resides in the cytoplasm. It catalyses the reaction tRNA(Glu) + L-glutamate + ATP = L-glutamyl-tRNA(Glu) + AMP + diphosphate. In terms of biological role, catalyzes the attachment of glutamate to tRNA(Glu) in a two-step reaction: glutamate is first activated by ATP to form Glu-AMP and then transferred to the acceptor end of tRNA(Glu). This chain is Glutamate--tRNA ligase, found in Pseudomonas aeruginosa (strain ATCC 15692 / DSM 22644 / CIP 104116 / JCM 14847 / LMG 12228 / 1C / PRS 101 / PAO1).